The chain runs to 185 residues: Ribosome-recycling factor (185 aa).

This sequence belongs to the RRF family.

The protein resides in the cytoplasm. Responsible for the release of ribosomes from messenger RNA at the termination of protein biosynthesis. May increase the efficiency of translation by recycling ribosomes from one round of translation to another. This Bacillus cytotoxicus (strain DSM 22905 / CIP 110041 / 391-98 / NVH 391-98) protein is Ribosome-recycling factor.